A 374-amino-acid polypeptide reads, in one-letter code: Translocating chain-associated membrane protein 1 (374 aa).

Residues 2-29 (AIRKKSTKSPPVLSHEFILQNHADIVSC) are Cytoplasmic-facing. A helical transmembrane segment spans residues 30-50 (VAMVFLLGLMFEITAKASIIF). The Lumenal segment spans residues 51 to 76 (VTLQYNVTLPATEEQATESTSLYYYG). A glycan (N-linked (GlcNAc...) asparagine) is linked at Asn56. A helical membrane pass occupies residues 77-97 (IKDLATVFFYMLVAIIIHAII). The Cytoplasmic portion of the chain corresponds to 98 to 121 (QEYVLDKINRRMHFSKTKHSKFNE). In terms of domain architecture, TLC spans 117–326 (SKFNESGQLS…NFQLRRWREH (210 aa)). Residues 122–142 (SGQLSAFYLFSCIWGTFILIS) form a helical membrane-spanning segment. Over 143–159 (ENYISDPTILWRAYPHN) the chain is Lumenal. The chain crosses the membrane as a helical span at residues 160–180 (LMTFQMKFFYIAQLAYWFHAF). The Cytoplasmic segment spans residues 181–192 (PELYFQKTKKED). Residues 193-213 (IPRQLVYIGLYLFHIAGAYLL) traverse the membrane as a helical segment. Residues 214 to 217 (NLNH) lie on the Lumenal side of the membrane. The chain crosses the membrane as a helical span at residues 218 to 238 (LGLVLLVLHYFVEFLFHISRL). At 239 to 251 (FYFSDEKYQKGFS) the chain is on the cytoplasmic side. The helical transmembrane segment at 252–272 (LWAVLFVLGRLLTLILSVLTV) threads the bilayer. Residues 273–297 (GFGLARAENQKLDFSAGNFNVLAVR) are Lumenal-facing. The chain crosses the membrane as a helical span at residues 298-318 (IAVLASICITQAFMMWKFINF). Residues 319-374 (QLRRWREHSTFQAPVVKKKPTVTKGRSSRKGTENGVNGTVTSNGADSPRNRKEKSS) lie on the Cytoplasmic side of the membrane. Residues 334-347 (VKKKPTVTKGRSSR) show a composition bias toward basic residues. The tract at residues 334–374 (VKKKPTVTKGRSSRKGTENGVNGTVTSNGADSPRNRKEKSS) is disordered. Residues 352–363 (NGVNGTVTSNGA) show a composition bias toward polar residues. At Ser365 the chain carries Phosphoserine.

Belongs to the TRAM family. In terms of assembly, interacts with SEC61B. May interact with Derlin-1/DERL1. N-glycosylated.

Its subcellular location is the endoplasmic reticulum membrane. Functionally, involved in the translocation of nascent protein chains into or through the endoplasmic reticulum (ER) membrane by facilitating the proper chain positioning at the SEC61 channel. Regulates the exposure of nascent secretory protein chain to the cytosol during translocation into the ER. May affect the phospholipid bilayer in the vicinity of the lateral gate of the SEC61 channel, thereby facilitating ER protein transport. Intimately associates with transmembrane (TM) domain of nascent membrane proteins during the entire integration process into the ER membrane. Associates with the second TM domain of G-protein-coupled receptor opsin/OPSD nascent chain in the ER membrane, which may facilitate its integration into the membrane. Under conditions of ER stress, participates in the disposal of misfolded ER membrane proteins during the unfolded protein response (UPR), an integrated stress response (ISR) pathway, by selectively retrotranslocating misfolded ER-membrane proteins from the ER into the cytosol where they are ubiquitinated and degraded by the proteasome. The polypeptide is Translocating chain-associated membrane protein 1 (TRAM1) (Canis lupus familiaris (Dog)).